We begin with the raw amino-acid sequence, 263 residues long: Glucosamine-6-phosphate deaminase (263 aa).

The active-site Proton acceptor; for enolization step is the Asp-67. Asn-136 acts as the For ring-opening step in catalysis. Catalysis depends on His-138, which acts as the Proton acceptor; for ring-opening step. Glu-143 acts as the For ring-opening step in catalysis.

The protein belongs to the glucosamine/galactosamine-6-phosphate isomerase family. NagB subfamily. In terms of assembly, homohexamer.

It carries out the reaction alpha-D-glucosamine 6-phosphate + H2O = beta-D-fructose 6-phosphate + NH4(+). The protein operates within amino-sugar metabolism; N-acetylneuraminate degradation; D-fructose 6-phosphate from N-acetylneuraminate: step 5/5. Catalyzes the reversible isomerization-deamination of glucosamine 6-phosphate (GlcN6P) to form fructose 6-phosphate (Fru6P) and ammonium ion. In Cellvibrio japonicus (strain Ueda107) (Pseudomonas fluorescens subsp. cellulosa), this protein is Glucosamine-6-phosphate deaminase.